Reading from the N-terminus, the 346-residue chain is Archaeosine synthase subunit beta (346 aa).

Residues 36 to 276 (GVQTKTLTVI…LRQAKAAHPE (241 aa)) form the Radical SAM core domain. 3 residues coordinate [4Fe-4S] cluster: cysteine 51, cysteine 59, and cysteine 62.

It belongs to the radical SAM superfamily. RaSEA family. Forms a robust complex with the archaeosine synthase alpha subunit ArcS. This complex likely consists of an alpha(2)beta(2) heterotetrameric structure. It depends on [4Fe-4S] cluster as a cofactor.

The catalysed reaction is 7-N-[(5S)-5-amino-5-carboxypentyl]formamidino-7-deazaguanosine(15) in tRNA + S-adenosyl-L-methionine = archaeosine(15) in tRNA + L-1-piperideine-6-carboxylate + 5'-deoxyadenosine + L-methionine + 2 H(+). The protein operates within tRNA modification; archaeosine-tRNA biosynthesis. Radical SAM enzyme involved in the synthesis of archaeosine, a modified nucleoside present in the dihydrouridine loop (D-loop) of archaeal tRNAs. Catalyzes the cleavage of the C(epsilon)-N bond of the lysine moiety of q0kN15-tRNA, leading to the formation of archaeosine at position 15 in tRNAs. This chain is Archaeosine synthase subunit beta, found in Methanosarcina acetivorans (strain ATCC 35395 / DSM 2834 / JCM 12185 / C2A).